A 137-amino-acid polypeptide reads, in one-letter code: MDSVIRFSVSLPSQLLDELDRKVSEQGYASRSEFTRDLIREKIVNDSWKDADEELIGVLTLIYVHHHNDLVNKKMDIEHDSDVKIICTNHVHVDHHNCLETISIRGEASKIERFADRIAGLKGVKFSKLTKAAVPKF.

Ni(2+) is bound by residues His79, His90, His92, and Cys98.

It belongs to the transcriptional regulatory CopG/NikR family. Ni(2+) serves as cofactor.

Functionally, transcriptional regulator. The sequence is that of Putative nickel-responsive regulator from Campylobacter concisus (strain 13826).